A 215-amino-acid chain; its full sequence is Urease accessory protein UreG (215 aa).

A GTP-binding site is contributed by 24 to 31; sequence GPVGSGKT.

This sequence belongs to the SIMIBI class G3E GTPase family. UreG subfamily. As to quaternary structure, homodimer. UreD, UreF and UreG form a complex that acts as a GTP-hydrolysis-dependent molecular chaperone, activating the urease apoprotein by helping to assemble the nickel containing metallocenter of UreC. The UreE protein probably delivers the nickel.

The protein resides in the cytoplasm. In terms of biological role, facilitates the functional incorporation of the urease nickel metallocenter. This process requires GTP hydrolysis, probably effectuated by UreG. The polypeptide is Urease accessory protein UreG (Burkholderia ambifaria (strain ATCC BAA-244 / DSM 16087 / CCUG 44356 / LMG 19182 / AMMD) (Burkholderia cepacia (strain AMMD))).